A 175-amino-acid polypeptide reads, in one-letter code: NPCCDAATCKLKSGSQCGHGDCCEQCKFSKSGTECRASMSECDPAEHCTGQSSECPADVFHKNGQPCLDNYGYCYNGNCPIMYHQCYDLFGADVYEAEDSCFERNQKGNYYGYCRKENGNKIPCAPEDVKCGRLYSKDNSPGQNNPCKMLCSNEDEHKGRFLEQTGRGKVCSNRQ.

The 63-residue stretch at 1-63 (NPCCDAATCK…ECPADVFHKN (63 aa)) folds into the Disintegrin domain. Disulfide bonds link C3–C26, C17–C23, C22–C48, C35–C55, C42–C74, C67–C79, C101–C147, C114–C124, and C131–C171. The D/ECD-tripeptide signature appears at 41–43 (ECD). Ca(2+) is bound by residues D43, P44, E46, D58, and V59.

It belongs to the venom metalloproteinase (M12B) family. P-III subfamily. P-IIIa sub-subfamily. As to quaternary structure, monomer. Zn(2+) is required as a cofactor. In terms of processing, glycosylated. As to expression, expressed by the venom gland.

The protein resides in the secreted. Its function is as follows. Snake venom metalloproteinase that impairs hemostasis in the envenomed animal. The polypeptide is Zinc metalloproteinase-disintegrin-like catroriarin (Crotalus atrox (Western diamondback rattlesnake)).